We begin with the raw amino-acid sequence, 67 residues long: MRLVVCLVFLASFALVCQGHSSGYTRPLPKPSRPIFIRPIGCDVCYGIPSSTARLCCFRYGDCCHRG.

Residues M1–G19 form the signal peptide. 3 disulfides stabilise this stretch: C42/C56, C45/C63, and C57/C64. Position 66 is an arginine amide (R66).

The protein belongs to the penaeidin family.

Its subcellular location is the cytoplasmic granule. Its function is as follows. Antibacterial and antifungal activity. Presents chitin-binding activity. The sequence is that of Penaeidin-4a from Penaeus vannamei (Whiteleg shrimp).